The primary structure comprises 184 residues: Probable maltose O-acetyltransferase (184 aa).

Residue asparagine 84 coordinates acetyl-CoA. Histidine 114 acts as the Proton donor/acceptor in catalysis. Acetyl-CoA-binding positions include glycine 141, serine 159, threonine 164–lysine 165, arginine 179, and lysine 182.

This sequence belongs to the transferase hexapeptide repeat family. In terms of assembly, homodimer.

The catalysed reaction is D-maltose + acetyl-CoA = 1-O-acetylmaltose + CoA. Catalyzes the CoA-dependent transfer of an acetyl group to maltose and other sugars. Acetylates glucose exclusively at the C6 position and maltose at the C6 position of the non-reducing end glucosyl moiety. Is able to acetylate maltooligosaccharides. This is Probable maltose O-acetyltransferase (maa) from Bacillus subtilis (strain 168).